The sequence spans 309 residues: Taste receptor type 2 member 114 (309 aa).

Topologically, residues 1–7 (MLGAMEG) are extracellular. A helical transmembrane segment spans residues 8–28 (VLLSVATSEALLGIVGNTFIA). Topologically, residues 29-43 (LVNCMDCTRNKNLYN) are cytoplasmic. Residues 44 to 64 (IGFILTGLAISRICLVWILIT) form a helical membrane-spanning segment. Topologically, residues 65 to 87 (EAYIKIFSPQLLSPINIIELISY) are extracellular. A helical membrane pass occupies residues 88 to 108 (LWIITSQLNVWFATSLSIFYF). The Cytoplasmic segment spans residues 109–127 (LKIANFSHHIFLWLKRRIN). The chain crosses the membrane as a helical span at residues 128-148 (IVFAFLIGCLLMSWLFSFPVV). Topologically, residues 149–182 (VKMVKDKKMLYINSSWQIHMKKSELIINYVFTNG) are extracellular. The N-linked (GlcNAc...) asparagine glycan is linked to Asn161. Residues 183–203 (GVFLLFIIMLIVCFLLIISLW) traverse the membrane as a helical segment. The Cytoplasmic portion of the chain corresponds to 204–233 (RHSKWMQSNESGFRDLNTEVHVKTIKVLLS). Residues 234–254 (FIILFILHLIGITINVICLLV) traverse the membrane as a helical segment. The Extracellular segment spans residues 255–259 (PENNL). A helical membrane pass occupies residues 260 to 280 (LFVFGLTIAFLYPCCHSLILI). Residues 281–309 (LANSRLKRCFVRILQQLMCSEEGKEFRNT) are Cytoplasmic-facing.

This sequence belongs to the G-protein coupled receptor T2R family.

The protein resides in the membrane. Functionally, putative taste receptor which may play a role in the perception of bitterness. This Rattus norvegicus (Rat) protein is Taste receptor type 2 member 114.